Reading from the N-terminus, the 363-residue chain is Sorting nexin-21 (363 aa).

Residues 1–11 show a composition bias toward basic residues; sequence MASRLLHRLRH. A disordered region spans residues 1-99; the sequence is MASRLLHRLR…PPPDGQRSSQ (99 aa). Residues 12 to 28 show a composition bias toward low complexity; that stretch reads ALASDGPGEAAAGPEAE. Over residues 46–56 the composition is skewed to polar residues; sequence SRLSGTLSFTS. Residues 57–71 are compositionally biased toward acidic residues; it reads AEDDPDDEDEDDEAG. Positions 119–236 constitute a PX domain; the sequence is QRLLFEVTSA…DFFVLPELRR (118 aa). The a 1,2-diacyl-sn-glycero-3-phospho-(1D-myo-inositol-3-phosphate) site is built by R161, S163, K188, and R202.

This sequence belongs to the sorting nexin family. In terms of assembly, monomer.

It is found in the cytoplasmic vesicle membrane. The protein localises to the early endosome membrane. In terms of biological role, binds to membranes enriched in phosphatidylinositol 3-phosphate (PtdIns(P3)) and phosphatidylinositol 4,5-bisphosphate. May be involved in several stages of intracellular trafficking. The polypeptide is Sorting nexin-21 (Mus musculus (Mouse)).